The chain runs to 337 residues: tRNA N6-adenosine threonylcarbamoyltransferase (337 aa).

Residues H111 and H115 each coordinate Fe cation. Substrate-binding positions include 134-138, D167, G180, and N272; that span reads LVSGG. Fe cation is bound at residue D300.

This sequence belongs to the KAE1 / TsaD family. Requires Fe(2+) as cofactor.

Its subcellular location is the cytoplasm. The enzyme catalyses L-threonylcarbamoyladenylate + adenosine(37) in tRNA = N(6)-L-threonylcarbamoyladenosine(37) in tRNA + AMP + H(+). In terms of biological role, required for the formation of a threonylcarbamoyl group on adenosine at position 37 (t(6)A37) in tRNAs that read codons beginning with adenine. Is involved in the transfer of the threonylcarbamoyl moiety of threonylcarbamoyl-AMP (TC-AMP) to the N6 group of A37, together with TsaE and TsaB. TsaD likely plays a direct catalytic role in this reaction. The chain is tRNA N6-adenosine threonylcarbamoyltransferase from Klebsiella pneumoniae (strain 342).